A 116-amino-acid polypeptide reads, in one-letter code: Large ribosomal subunit protein eL22B (116 aa).

It belongs to the eukaryotic ribosomal protein eL22 family.

The polypeptide is Large ribosomal subunit protein eL22B (rpl22a) (Dictyostelium discoideum (Social amoeba)).